The following is a 135-amino-acid chain: uncharacterized protein (135 aa).

Belongs to the asp23 family.

This is an uncharacterized protein from Bacillus subtilis (strain 168).